The sequence spans 207 residues: FMN-dependent NADH:quinone oxidoreductase 2 (207 aa).

Residues Ser10, 16-18, 96-99, and 141-144 contribute to the FMN site; these read SIS, MYNL, and SRGG.

This sequence belongs to the azoreductase type 1 family. Homodimer. Requires FMN as cofactor.

The catalysed reaction is 2 a quinone + NADH + H(+) = 2 a 1,4-benzosemiquinone + NAD(+). It carries out the reaction N,N-dimethyl-1,4-phenylenediamine + anthranilate + 2 NAD(+) = 2-(4-dimethylaminophenyl)diazenylbenzoate + 2 NADH + 2 H(+). In terms of biological role, quinone reductase that provides resistance to thiol-specific stress caused by electrophilic quinones. Its function is as follows. Also exhibits azoreductase activity. Catalyzes the reductive cleavage of the azo bond in aromatic azo compounds to the corresponding amines. This is FMN-dependent NADH:quinone oxidoreductase 2 from Trichormus variabilis (strain ATCC 29413 / PCC 7937) (Anabaena variabilis).